We begin with the raw amino-acid sequence, 225 residues long: Phosphoribosylformylglycinamidine synthase subunit PurQ (225 aa).

A Glutamine amidotransferase type-1 domain is found at 5–225 (SAVITFPGSN…ESVVRGLVEA (221 aa)). Cysteine 89 acts as the Nucleophile in catalysis. Active-site residues include histidine 197 and glutamate 199.

In terms of assembly, part of the FGAM synthase complex composed of 1 PurL, 1 PurQ and 2 PurS subunits.

Its subcellular location is the cytoplasm. The enzyme catalyses N(2)-formyl-N(1)-(5-phospho-beta-D-ribosyl)glycinamide + L-glutamine + ATP + H2O = 2-formamido-N(1)-(5-O-phospho-beta-D-ribosyl)acetamidine + L-glutamate + ADP + phosphate + H(+). It catalyses the reaction L-glutamine + H2O = L-glutamate + NH4(+). It functions in the pathway purine metabolism; IMP biosynthesis via de novo pathway; 5-amino-1-(5-phospho-D-ribosyl)imidazole from N(2)-formyl-N(1)-(5-phospho-D-ribosyl)glycinamide: step 1/2. Its function is as follows. Part of the phosphoribosylformylglycinamidine synthase complex involved in the purines biosynthetic pathway. Catalyzes the ATP-dependent conversion of formylglycinamide ribonucleotide (FGAR) and glutamine to yield formylglycinamidine ribonucleotide (FGAM) and glutamate. The FGAM synthase complex is composed of three subunits. PurQ produces an ammonia molecule by converting glutamine to glutamate. PurL transfers the ammonia molecule to FGAR to form FGAM in an ATP-dependent manner. PurS interacts with PurQ and PurL and is thought to assist in the transfer of the ammonia molecule from PurQ to PurL. The chain is Phosphoribosylformylglycinamidine synthase subunit PurQ from Novosphingobium aromaticivorans (strain ATCC 700278 / DSM 12444 / CCUG 56034 / CIP 105152 / NBRC 16084 / F199).